A 657-amino-acid chain; its full sequence is Probable intron-encoded endonuclease aI2 (657 aa).

The COX1 exons 1 to 2 encoded stretch occupies residues 1–245; it reads MKQMSYVTRW…TYEHLFWFFG (245 aa). Helical transmembrane passes span 19–39, 69–89, 103–123, 152–172, 188–208, and 269–289; these read IGMT…GMSV, LLMM…NFFL, LNNI…CSVL, AMFA…NFMV, PLFA…LPVL, and MYFI…ANMV. Residues 246–657 are COX1 intron 2 encoded; the sequence is QWWPTNYVNN…KFENKWNKKF (412 aa).

This sequence in the C-terminal section; belongs to the LAGLIDADG endonuclease family. In the N-terminal section; belongs to the heme-copper respiratory oxidase family. Post-translationally, the mature protein may arise from proteolytic cleavage of an in-frame translation of COX1 exons 1 and 2 plus intron 2, containing the aI2 open reading frame.

The protein resides in the mitochondrion. The protein localises to the membrane. Mitochondrial DNA endonuclease involved in intron homing. The polypeptide is Probable intron-encoded endonuclease aI2 (aI2) (Debaryomyces hansenii (strain ATCC 36239 / CBS 767 / BCRC 21394 / JCM 1990 / NBRC 0083 / IGC 2968) (Yeast)).